Consider the following 335-residue polypeptide: Phosphate acyltransferase (335 aa).

This sequence belongs to the PlsX family. In terms of assembly, homodimer. Probably interacts with PlsY.

Its subcellular location is the cytoplasm. The enzyme catalyses a fatty acyl-[ACP] + phosphate = an acyl phosphate + holo-[ACP]. It functions in the pathway lipid metabolism; phospholipid metabolism. Functionally, catalyzes the reversible formation of acyl-phosphate (acyl-PO(4)) from acyl-[acyl-carrier-protein] (acyl-ACP). This enzyme utilizes acyl-ACP as fatty acyl donor, but not acyl-CoA. The sequence is that of Phosphate acyltransferase from Streptococcus equi subsp. zooepidemicus (strain H70).